The sequence spans 98 residues: NADH-ubiquinone oxidoreductase chain 4L (98 aa).

The next 3 helical transmembrane spans lie at 1 to 21 (MSLT…GLLM), 29 to 49 (SLLC…ITIL), and 61 to 81 (IILL…LVMV).

The protein belongs to the complex I subunit 4L family. Core subunit of respiratory chain NADH dehydrogenase (Complex I) which is composed of 45 different subunits.

The protein resides in the mitochondrion inner membrane. The catalysed reaction is a ubiquinone + NADH + 5 H(+)(in) = a ubiquinol + NAD(+) + 4 H(+)(out). Functionally, core subunit of the mitochondrial membrane respiratory chain NADH dehydrogenase (Complex I) which catalyzes electron transfer from NADH through the respiratory chain, using ubiquinone as an electron acceptor. Part of the enzyme membrane arm which is embedded in the lipid bilayer and involved in proton translocation. The sequence is that of NADH-ubiquinone oxidoreductase chain 4L (MT-ND4L) from Ectophylla alba (White bat).